The sequence spans 262 residues: Glutamate racemase (262 aa).

Residues 5 to 6 and 37 to 38 contribute to the substrate site; these read DS and YG. C69 acts as the Proton donor/acceptor in catalysis. Position 70 to 71 (70 to 71) interacts with substrate; the sequence is NT. Catalysis depends on C181, which acts as the Proton donor/acceptor. 182–183 is a substrate binding site; sequence TH.

The protein belongs to the aspartate/glutamate racemases family.

The enzyme catalyses L-glutamate = D-glutamate. It participates in cell wall biogenesis; peptidoglycan biosynthesis. In terms of biological role, provides the (R)-glutamate required for cell wall biosynthesis. The chain is Glutamate racemase from Buchnera aphidicola subsp. Acyrthosiphon pisum (strain APS) (Acyrthosiphon pisum symbiotic bacterium).